Here is a 940-residue protein sequence, read N- to C-terminus: Valine--tRNA ligase (940 aa).

Residues 47-57 carry the 'HIGH' region motif; it reads PNVTGILHMGH. The 'KMSKS' region signature appears at 564–568; that stretch reads KLSKS. Lys567 is an ATP binding site. Positions 872 to 938 form a coiled coil; the sequence is PIEQITKEKN…LQSILDKLAS (67 aa).

This sequence belongs to the class-I aminoacyl-tRNA synthetase family. ValS type 1 subfamily. In terms of assembly, monomer.

The protein localises to the cytoplasm. It carries out the reaction tRNA(Val) + L-valine + ATP = L-valyl-tRNA(Val) + AMP + diphosphate. Catalyzes the attachment of valine to tRNA(Val). As ValRS can inadvertently accommodate and process structurally similar amino acids such as threonine, to avoid such errors, it has a 'posttransfer' editing activity that hydrolyzes mischarged Thr-tRNA(Val) in a tRNA-dependent manner. This Chlamydia felis (strain Fe/C-56) (Chlamydophila felis) protein is Valine--tRNA ligase.